Consider the following 1042-residue polypeptide: SWI/SNF-related matrix-associated actin-dependent regulator of chromatin subfamily A member 1 (1042 aa).

The segment at 25–82 is disordered; sequence EDEQPGPSTSQEEGAAAAATEATAATEKGEKKKEKNVSSFQLKLAAKAPKSEKEMDPE. Residues 36–50 show a composition bias toward low complexity; that stretch reads EEGAAAAATEATAAT. Basic and acidic residues-rich tracts occupy residues 51-60 and 73-82; these read EKGEKKKEKN and PKSEKEMDPE. A phosphoserine mark is found at Ser-116 and Ser-119. A Helicase ATP-binding domain is found at 195 to 360; that stretch reads ISLYENGVNG…WALLNFLLPD (166 aa). 208–215 is an ATP binding site; the sequence is DEMGLGKT. A DEAH box motif is present at residues 311-314; that stretch reads DEAH. The 152-residue stretch at 490–641 folds into the Helicase C-terminal domain; it reads VLDKLLAKLK…SIVIQQGRLI (152 aa). Glycyl lysine isopeptide (Lys-Gly) (interchain with G-Cter in SUMO2) cross-links involve residues Lys-650, Lys-716, and Lys-738. The tract at residues 819–849 is disordered; the sequence is EQKKIDGAEPLTPEETEEKEKLLTQGFTNWT. Basic and acidic residues predominate over residues 828 to 837; that stretch reads PLTPEETEEK. Residues 843–895 form the SANT 1 domain; it reads QGFTNWTKRDFNQFIKANEKYGRDDIDNIAREVEGKSPEEVMEYSAVFWERCN. Tyr-942 carries the post-translational modification Phosphotyrosine. The SANT 2 domain occupies 946–1010; that stretch reads KGKNYTEEED…QRRCNTLISL (65 aa).

The protein belongs to the SNF2/RAD54 helicase family. ISWI subfamily. In terms of assembly, may form homodimers. Component of the ACF-1 ISWI chromatin remodeling complex at least composed of SMARCA1 and BAZ1A, which regulates the spacing of histone octamers on the DNA template to facilitate access to DNA. Within the complex interacts with BAZ1A; the interaction is direct. Component of the WICH-1 ISWI chromatin remodeling complex at least composed of SMARCA1 and BAZ1B/WSTF. Within the complex interacts with BAZ1B/WSTF. Component of the NoRC-1 ISWI chromatin remodeling complex at least composed of SMARCA1 and BAZ2A/TIP5. Within the complex interacts with BAZ2A/TIP5. Component of the BRF-1 ISWI chromatin remodeling complex at least composed of SMARCA1 and BAZ2B. Within the complex interacts with BAZ2B. Component of the NURF-1 ISWI chromatin remodeling complex (also called the nucleosome-remodeling factor (NURF) complex) at least composed of SMARCA1, BPTF, RBBP4 and RBBP7. Within the complex interacts with BPTF. Within the complex interacts with RBBP4 and RBBP7. Component of the CERF-1 ISWI chromatin remodeling complex (also called the CECR2-containing-remodeling factor (CERF) complex) at least composed of CECR2 and SMARCA1. LUZP1 is detected as part of the CERF-1 complex in embryonic stem cells where it is involved in complex stabilization but is not detected in the complex in the testis. Component of the RSF-1 ISWI chromatin remodeling complex at least composed of SMARCA1 and RSF1. Within the complex interacts with RSF1. Interacts with PRLR. Interacts with ERCC6. May form homodimers. Component of the BPFT-SMARCA1 complex at least composed of SMARCA1, BPFT, RBBP4 and RBBP7; the complex is catalytically inactive and does not remodel chromatin. Within the complex interacts with BPTF, RBBP4 and RBBP7. Component of the BAZ1A-1-SMARCA1 complex at least composed of SMARCA1 and BAZ1A; the complex is catalytically inactive and does not remodel chromatin. Component of the BAZ1B-1-SMARCA1 complex at least composed of SMARCA1 and BAZ1B; the complex is catalytically inactive and does not remodel chromatin. As to expression, expressed in lung, breast, kidney, ovary, skeletal muscle and brain. Mainly expressed in non-neuronal tissues such as lung, breast, kidney, and ovary.

It is found in the nucleus. Its subcellular location is the chromosome. The enzyme catalyses ATP + H2O = ADP + phosphate + H(+). Its function is as follows. ATPase that possesses intrinsic ATP-dependent chromatin-remodeling activity. ATPase activity is substrate-dependent, and is increased when nucleosomes are the substrate, but is also catalytically active when DNA alone is the substrate. Catalytic subunit of ISWI chromatin-remodeling complexes, which form ordered nucleosome arrays on chromatin and facilitate access to DNA during DNA-templated processes such as DNA replication, transcription, and repair. Within the ISWI chromatin-remodeling complexes, slides edge- and center-positioned histone octamers away from their original location on the DNA template. Catalytic activity and histone octamer sliding propensity is regulated and determined by components of the ISWI chromatin-remodeling complexes. The BAZ1A-, BAZ1B-, BAZ2A- and BAZ2B-containing ISWI chromatin-remodeling complexes regulate the spacing of nucleosomes along the chromatin and have the ability to slide mononucleosomes to the center of a DNA template. The CECR2- and RSF1-containing ISWI chromatin-remodeling complexes do not have the ability to slide mononucleosomes to the center of a DNA template. Within the NURF-1 and CERF-1 ISWI chromatin remodeling complexes, nucleosomes are the preferred substrate for its ATPase activity. Within the NURF-1 ISWI chromatin-remodeling complex, binds to the promoters of En1 and En2 to positively regulate their expression and promote brain development. May promote neurite outgrowth. May be involved in the development of luteal cells. Facilitates nucleosome assembly during DNA replication, ensuring replication fork progression and genomic stability by preventing replication stress and nascent DNA gaps. Functionally, catalytically inactive when either DNA or nucleosomes are the substrate and does not possess chromatin-remodeling activity. Acts as a negative regulator of chromatin remodelers by generating inactive complexes. This is SWI/SNF-related matrix-associated actin-dependent regulator of chromatin subfamily A member 1 from Homo sapiens (Human).